The sequence spans 335 residues: Glycerol-3-phosphate dehydrogenase [NAD(P)+] (335 aa).

NADPH-binding residues include Ser12, Trp13, and Lys107. Sn-glycerol 3-phosphate contacts are provided by Lys107, Gly138, and Ser140. Residue Ala142 participates in NADPH binding. Positions 193, 246, 256, 257, and 258 each coordinate sn-glycerol 3-phosphate. Lys193 serves as the catalytic Proton acceptor. Arg257 lines the NADPH pocket. 2 residues coordinate NADPH: Val281 and Glu283.

This sequence belongs to the NAD-dependent glycerol-3-phosphate dehydrogenase family.

It localises to the cytoplasm. The enzyme catalyses sn-glycerol 3-phosphate + NAD(+) = dihydroxyacetone phosphate + NADH + H(+). It carries out the reaction sn-glycerol 3-phosphate + NADP(+) = dihydroxyacetone phosphate + NADPH + H(+). It participates in membrane lipid metabolism; glycerophospholipid metabolism. In terms of biological role, catalyzes the reduction of the glycolytic intermediate dihydroxyacetone phosphate (DHAP) to sn-glycerol 3-phosphate (G3P), the key precursor for phospholipid synthesis. This is Glycerol-3-phosphate dehydrogenase [NAD(P)+] from Geobacter sp. (strain M21).